Reading from the N-terminus, the 637-residue chain is tRNA uridine 5-carboxymethylaminomethyl modification enzyme MnmG (637 aa).

14-19 (GAGHAG) serves as a coordination point for FAD. 279-293 (GPRYCPSIEDKVVRF) provides a ligand contact to NAD(+).

It belongs to the MnmG family. Homodimer. Heterotetramer of two MnmE and two MnmG subunits. FAD is required as a cofactor.

It is found in the cytoplasm. Functionally, NAD-binding protein involved in the addition of a carboxymethylaminomethyl (cmnm) group at the wobble position (U34) of certain tRNAs, forming tRNA-cmnm(5)s(2)U34. The protein is tRNA uridine 5-carboxymethylaminomethyl modification enzyme MnmG of Desulfitobacterium hafniense (strain Y51).